A 390-amino-acid chain; its full sequence is UPF0229 protein Cbei_0567 (390 aa).

The segment at 77-108 is disordered; sequence SGVGNEKRGEKLGNGNKKLAKGNQGAGNEEGD. Residues 89-103 show a composition bias toward low complexity; that stretch reads GNGNKKLAKGNQGAG.

It belongs to the UPF0229 family.

This Clostridium beijerinckii (strain ATCC 51743 / NCIMB 8052) (Clostridium acetobutylicum) protein is UPF0229 protein Cbei_0567.